The chain runs to 90 residues: DNA-binding protein HU-alpha (90 aa).

It belongs to the bacterial histone-like protein family. In terms of assembly, heterodimer of an alpha and a beta chain.

Functionally, histone-like DNA-binding protein which is capable of wrapping DNA to stabilize it, and thus to prevent its denaturation under extreme environmental conditions. The protein is DNA-binding protein HU-alpha (hupA) of Escherichia coli O157:H7.